Consider the following 120-residue polypeptide: Immunoglobulin kappa variable 2D-28 (120 aa).

The signal sequence occupies residues 1 to 19 (MRLPAQLLGLLMLWVSGSS). The 101-residue stretch at 20–120 (GDIVMTQSPL…YYCMQALQTP (101 aa)) folds into the Ig-like domain. The interval 21-43 (DIVMTQSPLSLPVTPGEPASISC) is framework-1. An intrachain disulfide couples Cys-43 to Cys-113. Residues 44-59 (RSSQSLLHSNGYNYLD) form a complementarity-determining-1 region. Residues 60–74 (WYLQKPGQSPQLLIY) form a framework-2 region. The tract at residues 75-81 (LGSNRAS) is complementarity-determining-2. The tract at residues 82 to 113 (GVPDRFSGSGSGTDFTLKISRVEAEDVGVYYC) is framework-3. The tract at residues 114-120 (MQALQTP) is complementarity-determining-3.

As to quaternary structure, immunoglobulins are composed of two identical heavy chains and two identical light chains; disulfide-linked.

It is found in the secreted. The protein resides in the cell membrane. Its function is as follows. V region of the variable domain of immunoglobulin light chains that participates in the antigen recognition. Immunoglobulins, also known as antibodies, are membrane-bound or secreted glycoproteins produced by B lymphocytes. In the recognition phase of humoral immunity, the membrane-bound immunoglobulins serve as receptors which, upon binding of a specific antigen, trigger the clonal expansion and differentiation of B lymphocytes into immunoglobulins-secreting plasma cells. Secreted immunoglobulins mediate the effector phase of humoral immunity, which results in the elimination of bound antigens. The antigen binding site is formed by the variable domain of one heavy chain, together with that of its associated light chain. Thus, each immunoglobulin has two antigen binding sites with remarkable affinity for a particular antigen. The variable domains are assembled by a process called V-(D)-J rearrangement and can then be subjected to somatic hypermutations which, after exposure to antigen and selection, allow affinity maturation for a particular antigen. The polypeptide is Immunoglobulin kappa variable 2D-28 (Homo sapiens (Human)).